A 236-amino-acid polypeptide reads, in one-letter code: Uridylate kinase (236 aa).

K12–G15 contacts ATP. The segment at G20–G25 is involved in allosteric activation by GTP. G54 lines the UMP pocket. ATP-binding residues include G55 and R59. Residues D72 and T133 to T140 each bind UMP. Residues Y166 and D169 each coordinate ATP.

The protein belongs to the UMP kinase family. As to quaternary structure, homohexamer.

The protein localises to the cytoplasm. The catalysed reaction is UMP + ATP = UDP + ADP. It functions in the pathway pyrimidine metabolism; CTP biosynthesis via de novo pathway; UDP from UMP (UMPK route): step 1/1. Its activity is regulated as follows. Allosterically activated by GTP. Inhibited by UTP. Catalyzes the reversible phosphorylation of UMP to UDP. In Clostridium novyi (strain NT), this protein is Uridylate kinase.